The primary structure comprises 191 residues: Classical arabinogalactan protein 9 (191 aa).

A signal peptide spans 1 to 20; it reads MARSFAIAVICIVLIAGVTG. The tract at residues 20–172 is disordered; that stretch reads GQAPTSPPTA…SPTDVNDQNG (153 aa). Q21 carries the pyrrolidone carboxylic acid modification. 5 positions are modified to 4-hydroxyproline: P23, P26, P27, P31, and P33. Positions 24–146 are enriched in pro residues; that stretch reads TSPPTATPAP…PSPSSSPPLP (123 aa). P26, P27, P31, and P33 each carry an O-linked (Ara...) hydroxyproline glycan. The span at 155–172 shows a compositional bias: polar residues; sequence TDSISPAPSPTDVNDQNG. The GPI-anchor amidated glycine moiety is linked to residue G172. A propeptide spans 173–191 (removed in mature form); the sequence is ASKMVSSLVFGSVLVWFMI.

This sequence belongs to the classical AGP family. In terms of processing, O-glycosylated on hydroxyprolines; noncontiguous hydroxylproline residues are glycosylated with arabinogalactan. Predominantly expressed in flowers and at a lower level in leaves and siliques.

It is found in the cell membrane. Its function is as follows. Proteoglycan that seems to be implicated in diverse developmental roles such as differentiation, cell-cell recognition, embryogenesis and programmed cell death. This chain is Classical arabinogalactan protein 9 (AGP9), found in Arabidopsis thaliana (Mouse-ear cress).